Reading from the N-terminus, the 544-residue chain is Phenylalanine--tRNA ligase beta subunit (544 aa).

The region spanning 268–343 (LIHKIQNVRE…MSIGYNNLEP (76 aa)) is the B5 domain. Residues Asp321, Asp327, Glu330, and Asp331 each contribute to the Mg(2+) site.

This sequence belongs to the phenylalanyl-tRNA synthetase beta subunit family. Type 2 subfamily. Tetramer of two alpha and two beta subunits. Mg(2+) serves as cofactor.

The protein localises to the cytoplasm. It carries out the reaction tRNA(Phe) + L-phenylalanine + ATP = L-phenylalanyl-tRNA(Phe) + AMP + diphosphate + H(+). In Saccharolobus solfataricus (strain ATCC 35092 / DSM 1617 / JCM 11322 / P2) (Sulfolobus solfataricus), this protein is Phenylalanine--tRNA ligase beta subunit.